We begin with the raw amino-acid sequence, 602 residues long: Elongation factor 4 (602 aa).

The region spanning 8-190 (DLIRNFSIVA…AIVHRLPPPK (183 aa)) is the tr-type G domain. GTP is bound by residues 20–25 (DHGKST) and 137–140 (NKID).

Belongs to the TRAFAC class translation factor GTPase superfamily. Classic translation factor GTPase family. LepA subfamily.

Its subcellular location is the cell inner membrane. It catalyses the reaction GTP + H2O = GDP + phosphate + H(+). Required for accurate and efficient protein synthesis under certain stress conditions. May act as a fidelity factor of the translation reaction, by catalyzing a one-codon backward translocation of tRNAs on improperly translocated ribosomes. Back-translocation proceeds from a post-translocation (POST) complex to a pre-translocation (PRE) complex, thus giving elongation factor G a second chance to translocate the tRNAs correctly. Binds to ribosomes in a GTP-dependent manner. The sequence is that of Elongation factor 4 from Cereibacter sphaeroides (strain ATCC 17023 / DSM 158 / JCM 6121 / CCUG 31486 / LMG 2827 / NBRC 12203 / NCIMB 8253 / ATH 2.4.1.) (Rhodobacter sphaeroides).